Here is a 210-residue protein sequence, read N- to C-terminus: 3-hexulose-6-phosphate synthase (210 aa).

This sequence belongs to the HPS/KGPDC family. HPS subfamily.

The enzyme catalyses D-ribulose 5-phosphate + formaldehyde = D-arabino-hex-3-ulose 6-phosphate. It functions in the pathway one-carbon metabolism; formaldehyde assimilation via RuMP pathway; D-fructose 6-phosphate from D-ribulose 5-phosphate and formaldehyde: step 1/2. Functionally, catalyzes the condensation of ribulose 5-phosphate with formaldehyde to form 3-hexulose 6-phosphate. The sequence is that of 3-hexulose-6-phosphate synthase from Staphylococcus aureus (strain bovine RF122 / ET3-1).